We begin with the raw amino-acid sequence, 334 residues long: Methionine adenosyltransferase 2 subunit beta (334 aa).

NADP(+)-binding positions include 37–40, 60–62, 71–72, Cys-93, Arg-97, Tyr-159, and Leu-185; these read TGLL, YSR, and NL. The segment at 319–334 is required for interaction with MAT2A; that stretch reads LWPFLVDKRWRQTVFH.

It belongs to the dTDP-4-dehydrorhamnose reductase family. MAT2B subfamily. As to quaternary structure, heterotrimer; composed of a catalytic mat2a homodimer that binds one regulatory mat2b chain. Heterohexamer; composed of a central, catalytic mat2a homotetramer flanked on either side by a regulatory mat2b chain. NADP binding increases the affinity for mat2a.

It functions in the pathway amino-acid biosynthesis; S-adenosyl-L-methionine biosynthesis; S-adenosyl-L-methionine from L-methionine: step 1/1. Functionally, regulatory subunit of S-adenosylmethionine synthetase 2, an enzyme that catalyzes the formation of S-adenosylmethionine from methionine and ATP. Regulates MAT2A catalytic activity by changing its kinetic properties, increasing its affinity for L-methionine. Can bind NADP (in vitro). The sequence is that of Methionine adenosyltransferase 2 subunit beta (mat2b) from Xenopus tropicalis (Western clawed frog).